Reading from the N-terminus, the 469-residue chain is COP9 signalosome complex subunit 5 (469 aa).

In terms of domain architecture, MPN spans 63–200 (TYISSLALCK…IGAFRTFPDN (138 aa)). Zn(2+)-binding residues include His-146, His-148, and Asp-159. Residues 146–159 (HSHPGYGCWLSGID) carry the JAMM motif motif. 2 disordered regions span residues 201–220 (YKSP…PPSK) and 331–404 (YDSF…KRPM). A compositionally biased stretch (acidic residues) spans 344–353 (DEMDDESDLD).

The protein belongs to the peptidase M67A family. CSN5 subfamily. In terms of assembly, component of the COP9 signalosome (CSN) complex.

It localises to the cytoplasm. The protein resides in the nucleus. Functionally, catalytic Component of the COP9 signalosome (CSN) complex that acts as an regulator of the ubiquitin (Ubl) conjugation pathway by mediating the deneddylation of the cullin subunit of SCF-type E3 ubiquitin-protein ligase complexes. The CSN complex is involved in the regulation of the mating pheromone response. In Debaryomyces hansenii (strain ATCC 36239 / CBS 767 / BCRC 21394 / JCM 1990 / NBRC 0083 / IGC 2968) (Yeast), this protein is COP9 signalosome complex subunit 5 (RRI1).